The following is an 89-amino-acid chain: Small ribosomal subunit protein uS17 (89 aa).

Belongs to the universal ribosomal protein uS17 family. Part of the 30S ribosomal subunit.

In terms of biological role, one of the primary rRNA binding proteins, it binds specifically to the 5'-end of 16S ribosomal RNA. The polypeptide is Small ribosomal subunit protein uS17 (Azoarcus sp. (strain BH72)).